The sequence spans 261 residues: tRNA (guanine-N(1)-)-methyltransferase (261 aa).

S-adenosyl-L-methionine contacts are provided by residues G113 and I133–L138.

This sequence belongs to the RNA methyltransferase TrmD family. In terms of assembly, homodimer.

It is found in the cytoplasm. The enzyme catalyses guanosine(37) in tRNA + S-adenosyl-L-methionine = N(1)-methylguanosine(37) in tRNA + S-adenosyl-L-homocysteine + H(+). In terms of biological role, specifically methylates guanosine-37 in various tRNAs. The protein is tRNA (guanine-N(1)-)-methyltransferase of Xylella fastidiosa (strain M23).